Here is a 178-residue protein sequence, read N- to C-terminus: uncharacterized protein (178 aa).

Positions methionine 1–alanine 19 are cleaved as a signal peptide.

Belongs to the opacity porin family.

This is an uncharacterized protein from Haemophilus influenzae (strain ATCC 51907 / DSM 11121 / KW20 / Rd).